The chain runs to 271 residues: Ferric vibriobactin reductase ViuB (271 aa).

Residues 8–131 (VYPRLLDFVR…IGPGGPDPLI (124 aa)) enclose the FAD-binding FR-type domain.

This sequence belongs to the SIP oxidoreductase family. The cofactor is FAD.

The protein resides in the cytoplasm. It carries out the reaction 2 a Fe(II)-siderophore + NAD(+) + H(+) = 2 a Fe(III)-siderophore + NADH. Ferric-siderophore reductase involved in iron removal from the siderophores after their transport into the cell. Involved in intracellular removal of iron from iron-vibriobactin complex. Vibriobactin is an iron-chelating compound involved in the transport of iron from the bacterial environment into the cell cytoplasm. Ferric-vibriobactin reductase catalyzing the reduction of Fe(3+)-vibriobactin, a catecholate siderophore synthesized by V.cholerae. In Vibrio cholerae serotype O1 (strain ATCC 39541 / Classical Ogawa 395 / O395), this protein is Ferric vibriobactin reductase ViuB.